A 380-amino-acid chain; its full sequence is tRNA-specific 2-thiouridylase MnmA (380 aa).

Residues 9–16 (GVSGGVDS) and Met-35 each bind ATP. The interval 94 to 96 (NPD) is interaction with target base in tRNA. Catalysis depends on Cys-99, which acts as the Nucleophile. Cys-99 and Cys-195 are disulfide-bonded. An ATP-binding site is contributed by Gly-123. Positions 145-147 (KDQ) are interaction with tRNA. Residue Cys-195 is the Cysteine persulfide intermediate of the active site. Residues 308–309 (RY) are interaction with tRNA.

This sequence belongs to the MnmA/TRMU family.

Its subcellular location is the cytoplasm. The enzyme catalyses S-sulfanyl-L-cysteinyl-[protein] + uridine(34) in tRNA + AH2 + ATP = 2-thiouridine(34) in tRNA + L-cysteinyl-[protein] + A + AMP + diphosphate + H(+). Functionally, catalyzes the 2-thiolation of uridine at the wobble position (U34) of tRNA, leading to the formation of s(2)U34. The chain is tRNA-specific 2-thiouridylase MnmA from Stenotrophomonas maltophilia (strain R551-3).